The chain runs to 452 residues: Keratin, type II cytoskeletal 80 (452 aa).

The interval 1-82 (MACRSCVVGF…DPAVQQLKNQ (82 aa)) is head. Ser45 is subject to Phosphoserine. Positions 82–118 (QEKEEMKALNDKFASLIGKVQALEQRNQLLETRWSFL) are coil 1A. One can recognise an IF rod domain in the interval 83 to 394 (EKEEMKALND…KLVEGEEGRM (312 aa)). Positions 119 to 135 (QGQDSAIFDLGHLYEEY) are linker 1. A coil 1B region spans residues 136–227 (QGRLQEELRK…TIYEQELKDL (92 aa)). The linker 12 stretch occupies residues 228 to 251 (AAQVKDVSVTVGMDSRCHIDLSGI). Residues 252 to 390 (VEEVKAQYDA…ATYRKLVEGE (139 aa)) form a coil 2 region. Positions 391–452 (EGRMDSPSAT…YFSQESEVSE (62 aa)) are tail. Residue Ser396 is modified to Phosphoserine. The interval 412 to 434 (AASRSGLSKAPSRKKKGSKGPVI) is disordered.

It belongs to the intermediate filament family. In terms of assembly, heterotetramer of two type I and two type II keratins. Weakly expressed in tongue, but not skin or in any other tissues or organs examined.

In Homo sapiens (Human), this protein is Keratin, type II cytoskeletal 80 (KRT80).